The sequence spans 268 residues: Agamous-like MADS-box protein AGL15 (268 aa).

One can recognise an MADS-box domain in the interval 1 to 61 (MGRGKIEIKR…GKLFEYSSTG (61 aa)). The K-box domain maps to 80-170 (AEEDCAEVDI…RRQVQELRSF (91 aa)). The interval 205–268 (TDSDTTLQLG…PEAKRQRFSV (64 aa)) is disordered. The span at 218–232 (EAHDRRTNEGERESP) shows a compositional bias: basic and acidic residues. The span at 233–244 (SSDSVTTNTSSE) shows a compositional bias: polar residues.

In terms of assembly, homodimer. Interacts with SVP, AGL24, AP1, AGL6, AG, AGL1, AGL11, AGL5, AGL16, SOC1 and AGL21. Expressed at low levels in flowers and siliques. Also present in seedlings. Detected during embryogenesis and accumulates during early seed development (at protein level). Expressed in shoot apices and the base of leaf petioles.

It localises to the nucleus. The protein localises to the cytoplasm. Transcription factor involved in the negative regulation of flowering, probably through the photoperiodic pathway. Acts both as an activator and as a repressor of transcription. Binds DNA in a sequence-specific manner in large CArG motif 5'-CC (A/T)8 GG-3'. Participates probably in the regulation of programs active during the early stages of embryo development. Prevents premature perianth senescence and abscission, fruits development and seed desiccation. Stimulates the expression of at least DTA4, LEC2, FUS3, ABI3, AT4G38680/CSP2 and GRP2B/CSP4. Can enhance somatic embryo development in vitro. This Arabidopsis thaliana (Mouse-ear cress) protein is Agamous-like MADS-box protein AGL15 (AGL15).